A 447-amino-acid chain; its full sequence is MIKIYDTMSRDLREFVPIEDGKIKMYVCGPTVYNYIHVGNARSTVAFDTIRRYFEYRGYKVAYISNFTDVDDKIINRAREEGITPQEVADKYIAAFREDVTALGVKPATRHPRVVEFMADIIRFVEDLIERGFAYESQGDVYFRVEKSHNYAKLANKTLEDLELGASGRTDEETARKENPVDFALWKSSKPGEISWDSPWGPGRPGWHIECSVMSTEILGDTIDIHGGGADLEFPHHTNEIAQSEAKTGKAFANYWMHNGFVNIDNVKMSKSLGNFITVHDALKTLDGQVLRFFFATQHYRKPINFTEKAVRDAETNLKYLKNTYEQPFTGNVDAQELQNFKDKFVAAMDEDFNAANGITVVFEMAKWINSGNYDASVKQALADMLEIFGIVFVEEVLDAEIEDLIQKRQEARANRDFETADQIRDQLVTQGIKLLDTKDGVRWTRD.

Cys-28 contributes to the Zn(2+) binding site. The short motif at Pro-30–Asn-40 is the 'HIGH' region element. Zn(2+) contacts are provided by Cys-211, His-236, and Glu-240. Residues Lys-268–Ser-272 carry the 'KMSKS' region motif. Position 271 (Lys-271) interacts with ATP.

It belongs to the class-I aminoacyl-tRNA synthetase family. Monomer. Requires Zn(2+) as cofactor.

The protein localises to the cytoplasm. The catalysed reaction is tRNA(Cys) + L-cysteine + ATP = L-cysteinyl-tRNA(Cys) + AMP + diphosphate. This chain is Cysteine--tRNA ligase, found in Streptococcus pneumoniae (strain ATCC BAA-255 / R6).